The primary structure comprises 828 residues: Neurotrophin receptor-interacting factor 1 (828 aa).

In terms of domain architecture, KRAB 1 spans 14–85 (VKFEDVSLTF…QREIPQDTLP (72 aa)). Lysine 15 participates in a covalent cross-link: Glycyl lysine isopeptide (Lys-Gly) (interchain with G-Cter in ubiquitin). The SCAN box domain maps to 158 to 240 (RQKFRHFQYE…ALLENMTSVS (83 aa)). Residues 280 to 370 (VTFQDVAVDF…ESILEDGVKE (91 aa)) form the KRAB 2 domain. Disordered regions lie at residues 328–355 (RELTPDSPIPVVKPIHDPNTNDLSRNGT), 377–490 (NQVG…DPIT), and 575–611 (QKGYKEGNVQGNRNSWKHIKPHQKGSKGERVEELSTS). The span at 345-355 (PNTNDLSRNGT) shows a compositional bias: polar residues. The span at 384–394 (EKGHPQKKFSE) shows a compositional bias: basic and acidic residues. Residues 418–433 (KYVKVKQKGTGKRKGR) are compositionally biased toward basic residues. Over residues 458–478 (RSGSTPVTHGSSIKKQQQGSE) the composition is skewed to polar residues. A compositionally biased stretch (basic residues) spans 589–599 (SWKHIKPHQKG). Over residues 600-611 (SKGERVEELSTS) the composition is skewed to basic and acidic residues. C2H2-type zinc fingers lie at residues 684–706 (CRCSECGKLFRNARYFSVHKKIH), 712–734 (YMCMACGKAFVQSSSLTQHLRIH), 740–762 (FECSECGRTFNDRSAISQHLRTH), 768–790 (YHCERCGKAFRQSSHLTRHERTH), and 796–818 (YVCIKCGKAFTQSSHLIGHQKTH).

Belongs to the krueppel C2H2-type zinc-finger protein family. Interacts with NGFR/p75(NTR). Interacts (via KRAB 1 domain) with TRAF6. Interacts (when ubiquitinated at Lys-15) with SQSTM1/p62. Ubiquitinated by TRAF6 at Lys-15 through 'Lys-63'-linked polyubiquitination. 'Lys-63'-linked polyubiquitination occurs in response to NGFR/p75(NTR) cleavage by gamma-secretase and promotes binding with the ICD cleavage product of NGFR/p75(NTR), followed by translocation into the nucleus and subsequent apoptosis. As to expression, ubiquitously expressed at low level. Expressed at higher level in testis.

The protein localises to the cytoplasm. It localises to the nucleus. In terms of biological role, transcription regulator involved in NGFR/p75(NTR)-mediated apoptosis. Essential component of the NGFR/p75(NTR) apoptotic pathway: upon ligand-binding and subsequent cleavage of NGFR/p75(NTR), binds to the intracellular domain (ICD) cleavage product of NGFR/p75(NTR), translocates to the nucleus and induces apoptosis, possibly by regulating expression of key regulators of apoptosis. Induces NGFR/p75(NTR)-mediated apoptosis in retina and sympathetic neurons. May also regulate expression of neuronal cholesterol biosynthesis genes. Probably acts as a transcription repressor: specifically binds to the 3'-end of zinc-finger coding genes and recruiting chromatin-modifying proteins such as SETDB1 and TRIM28/KAP1, leading to transcription repression. The polypeptide is Neurotrophin receptor-interacting factor 1 (Nrif1) (Mus musculus (Mouse)).